A 1268-amino-acid chain; its full sequence is ATP-dependent helicase/nuclease subunit A (1268 aa).

In terms of domain architecture, UvrD-like helicase ATP-binding spans 3-476 (TKWTEEQELA…IMLYKNFRSR (474 aa)). An ATP-binding site is contributed by 24 to 31 (AAAGSGKT). The region spanning 528-824 (IENLKVAGDI…RIMSIHKSKG (297 aa)) is the UvrD-like helicase C-terminal domain.

It belongs to the helicase family. AddA subfamily. In terms of assembly, heterodimer of AddA and AddB/RexB. Mg(2+) is required as a cofactor.

It catalyses the reaction Couples ATP hydrolysis with the unwinding of duplex DNA by translocating in the 3'-5' direction.. The catalysed reaction is ATP + H2O = ADP + phosphate + H(+). In terms of biological role, the heterodimer acts as both an ATP-dependent DNA helicase and an ATP-dependent, dual-direction single-stranded exonuclease. Recognizes the chi site generating a DNA molecule suitable for the initiation of homologous recombination. The AddA nuclease domain is required for chi fragment generation; this subunit has the helicase and 3' -&gt; 5' nuclease activities. In Clostridium perfringens (strain 13 / Type A), this protein is ATP-dependent helicase/nuclease subunit A.